The following is a 706-amino-acid chain: Protein argonaute (706 aa).

The tract at residues 1-108 (MGKEALLNLY…ELFRDFLTKT (108 aa)) is N-terminal domain. Residues 109–165 (KVKDKFISDFYKKFRDKITVQGKNRKIALIPEVNEKVLKSEEGYFLLHLDLKFRIQP) are linker L1. Positions 168–259 (TLQTLLERND…YPATILKPVL (92 aa)) constitute a PAZ domain. The interval 263–334 (NLEDEERNEV…AKGKNTKVIT (72 aa)) is linker L2. Positions 335–448 (NLRKFLELCR…YDFVKRELLK (114 aa)) are mid domain. Residues 419–694 (LVIVFLEEYP…ITKLMLRGIE (276 aa)) form the Piwi domain. A PIWI domain region spans residues 449 to 706 (KMIPSQVILN…KKEGDIMYWL (258 aa)). Active-site residues include aspartate 502, glutamate 541, and aspartate 571. Aspartate 502 serves as a coordination point for Mn(2+). Aspartate 571 is a binding site for Mn(2+). The interval 612–650 (FIKGYFYKLSEDSVILATYNQVYEGTHQPIKVRKVYGEL) is PIWI box. Aspartate 683 is a catalytic residue. Aspartate 683 is a binding site for Mn(2+).

It belongs to the argonaute family. Long pAgo subfamily. It depends on Mg(2+) as a cofactor.

A DNA-guided RNA endonuclease. Uses short ssDNA sequences as guides (gDNA) to bind complementary target strands, resulting in cleavage of the target RNA. The cleavage site is 10 nucleotides downstream of the residue base paired with the 5'-end of the gDNA. Binds ssDNA better than ssRNA, binds dsDNA and DNA-RNA hybrids but does not bind dsRNA. A 2 nucleotide 3'-overhang (possibly on the guide strand) may help load nucleic acids into the complex. This Aquifex aeolicus (strain VF5) protein is Protein argonaute.